The chain runs to 500 residues: NAD(P)H-quinone oxidoreductase chain 4, chloroplastic (500 aa).

Helical transmembrane passes span 4 to 24 (FPWLTLIVIFPISAGSFLFFL), 35 to 55 (YTLCVCSLELLLTTYTFCYHF), 87 to 107 (FGPILLTGFITTLATLAAWPV), 134 to 154 (LLLFFMMWELELIPVYLLLSM), 167 to 187 (FILYTAGSSIFLLIGVLGIGL), 208 to 228 (ALEIIFYIGFLIAFAVKSPII), 242 to 262 (HYSTCMLLAGILLKMGAYGLV), 272 to 292 (AHSIFAPYLIIVGAIQIVYAA), 305 to 325 (IAYSSVSHMGFIIIGIGSITD), 330 to 350 (GALLQIISHGFIGAALFFLAG), 364 to 384 (MGGMAVAIPKIFTMFSILSMA), 386 to 406 (LALPGMSGFVAELIVFFGIIT), 416 to 436 (ILITFVMAIGMILTPIYSLSM), and 462 to 482 (LFVSISILLPVIGMGIYPDFL).

It belongs to the complex I subunit 4 family.

It is found in the plastid. The protein localises to the chloroplast thylakoid membrane. It catalyses the reaction a plastoquinone + NADH + (n+1) H(+)(in) = a plastoquinol + NAD(+) + n H(+)(out). The catalysed reaction is a plastoquinone + NADPH + (n+1) H(+)(in) = a plastoquinol + NADP(+) + n H(+)(out). The polypeptide is NAD(P)H-quinone oxidoreductase chain 4, chloroplastic (Pelargonium hortorum (Common geranium)).